Reading from the N-terminus, the 119-residue chain is Large ribosomal subunit protein bL20 (119 aa).

This sequence belongs to the bacterial ribosomal protein bL20 family.

Its function is as follows. Binds directly to 23S ribosomal RNA and is necessary for the in vitro assembly process of the 50S ribosomal subunit. It is not involved in the protein synthesizing functions of that subunit. The polypeptide is Large ribosomal subunit protein bL20 (Shewanella sediminis (strain HAW-EB3)).